The chain runs to 357 residues: 3-isopropylmalate dehydrogenase (357 aa).

Arginine 97, arginine 107, arginine 135, and aspartate 224 together coordinate substrate. Residues aspartate 224, aspartate 248, and aspartate 252 each coordinate Mg(2+). 282–294 contacts NAD(+); that stretch reads GSAPDIAGQDKAN.

The protein belongs to the isocitrate and isopropylmalate dehydrogenases family. LeuB type 1 subfamily. Homodimer. It depends on Mg(2+) as a cofactor. Mn(2+) serves as cofactor.

It is found in the cytoplasm. It carries out the reaction (2R,3S)-3-isopropylmalate + NAD(+) = 4-methyl-2-oxopentanoate + CO2 + NADH. Its pathway is amino-acid biosynthesis; L-leucine biosynthesis; L-leucine from 3-methyl-2-oxobutanoate: step 3/4. Its function is as follows. Catalyzes the oxidation of 3-carboxy-2-hydroxy-4-methylpentanoate (3-isopropylmalate) to 3-carboxy-4-methyl-2-oxopentanoate. The product decarboxylates to 4-methyl-2 oxopentanoate. In Synechococcus sp. (strain CC9902), this protein is 3-isopropylmalate dehydrogenase.